A 484-amino-acid polypeptide reads, in one-letter code: ATP synthase subunit beta (484 aa).

169–176 (GGAGVGKT) lines the ATP pocket.

It belongs to the ATPase alpha/beta chains family. In terms of assembly, F-type ATPases have 2 components, CF(1) - the catalytic core - and CF(0) - the membrane proton channel. CF(1) has five subunits: alpha(3), beta(3), gamma(1), delta(1), epsilon(1). CF(0) has three main subunits: a(1), b(2) and c(9-12). The alpha and beta chains form an alternating ring which encloses part of the gamma chain. CF(1) is attached to CF(0) by a central stalk formed by the gamma and epsilon chains, while a peripheral stalk is formed by the delta and b chains.

It is found in the cell membrane. It catalyses the reaction ATP + H2O + 4 H(+)(in) = ADP + phosphate + 5 H(+)(out). Produces ATP from ADP in the presence of a proton gradient across the membrane. The catalytic sites are hosted primarily by the beta subunits. In Nocardioides sp. (strain ATCC BAA-499 / JS614), this protein is ATP synthase subunit beta.